The chain runs to 568 residues: Oxygen-dependent choline dehydrogenase (568 aa).

FAD is bound at residue 8–37 (DYIIIGAGSAGNTLAARLTEDAGVTVLLLE). The active-site Proton acceptor is the His-477.

This sequence belongs to the GMC oxidoreductase family. FAD serves as cofactor.

The catalysed reaction is choline + A = betaine aldehyde + AH2. It catalyses the reaction betaine aldehyde + NAD(+) + H2O = glycine betaine + NADH + 2 H(+). Its pathway is amine and polyamine biosynthesis; betaine biosynthesis via choline pathway; betaine aldehyde from choline (cytochrome c reductase route): step 1/1. Its function is as follows. Involved in the biosynthesis of the osmoprotectant glycine betaine. Catalyzes the oxidation of choline to betaine aldehyde and betaine aldehyde to glycine betaine at the same rate. This is Oxygen-dependent choline dehydrogenase from Pseudomonas savastanoi pv. phaseolicola (strain 1448A / Race 6) (Pseudomonas syringae pv. phaseolicola (strain 1448A / Race 6)).